The sequence spans 329 residues: 4-hydroxythreonine-4-phosphate dehydrogenase (329 aa).

The substrate site is built by histidine 136 and threonine 137. A divalent metal cation is bound by residues histidine 166, histidine 211, and histidine 266. Residues lysine 274, asparagine 283, and arginine 292 each contribute to the substrate site.

Belongs to the PdxA family. As to quaternary structure, homodimer. Zn(2+) is required as a cofactor. Requires Mg(2+) as cofactor. Co(2+) serves as cofactor.

The protein localises to the cytoplasm. It carries out the reaction 4-(phosphooxy)-L-threonine + NAD(+) = 3-amino-2-oxopropyl phosphate + CO2 + NADH. Its pathway is cofactor biosynthesis; pyridoxine 5'-phosphate biosynthesis; pyridoxine 5'-phosphate from D-erythrose 4-phosphate: step 4/5. Functionally, catalyzes the NAD(P)-dependent oxidation of 4-(phosphooxy)-L-threonine (HTP) into 2-amino-3-oxo-4-(phosphooxy)butyric acid which spontaneously decarboxylates to form 3-amino-2-oxopropyl phosphate (AHAP). The chain is 4-hydroxythreonine-4-phosphate dehydrogenase from Salmonella typhimurium (strain LT2 / SGSC1412 / ATCC 700720).